Reading from the N-terminus, the 308-residue chain is Snake venom metalloprotease inhibitor 02D01 (308 aa).

The N-terminal stretch at M1–G23 is a signal peptide. A propeptide spanning residues K24–E38 is cleaved from the precursor. A Pyrrolidone carboxylic acid modification is found at Q39. Residues L42–E50 constitute a propeptide that is removed on maturation. Q51 bears the Pyrrolidone carboxylic acid mark. Positions L54 to E62 are excised as a propeptide. Q63 carries the post-translational modification Pyrrolidone carboxylic acid. Positions L66–E74 are excised as a propeptide. A Pyrrolidone carboxylic acid modification is found at Q75. A propeptide spanning residues L78–E86 is cleaved from the precursor. Q87 is modified (pyrrolidone carboxylic acid). The propeptide occupies L90–E98. Pyrrolidone carboxylic acid is present on Q99. The propeptide occupies L102–E110. Q111 is modified (pyrrolidone carboxylic acid). Positions L114 to E122 are excised as a propeptide. Pyrrolidone carboxylic acid is present on Q123. Residues L126 to E134 constitute a propeptide that is removed on maturation. Pyrrolidone carboxylic acid is present on Q135. Residues L138–E146 constitute a propeptide that is removed on maturation. The residue at position 147 (Q147) is a Pyrrolidone carboxylic acid. A propeptide spanning residues L150–E158 is cleaved from the precursor. Q159 is subject to Pyrrolidone carboxylic acid. The propeptide occupies Q162–L249. Positions R172 to L182 are enriched in polar residues. 2 disordered regions span residues R172–T228 and H252–R279. The span at V198 to S209 shows a compositional bias: gly residues. Over residues K210–A227 the composition is skewed to low complexity. Gly residues predominate over residues S265–A277. Residues R278–K286 constitute a propeptide that is removed on maturation. Cysteines 292 and 308 form a disulfide.

In the C-terminal section; belongs to the natriuretic peptide family. The protein in the central section; belongs to the pHpG family. Expressed by the venom gland.

It is found in the secreted. Its function is as follows. pEKW and poly-His-poly-Gly peptides may serve as metalloproteinase inhibitors during glandular storage. Their inhibition may be instantly disengaged, by dilution or physiochemical change, when venom is injected into tissue of the prey. In terms of biological role, has a vasorelaxant activity in rat aortic strips and a diuretic potency in anesthetized rats. May act by activating natriuretic receptors (NPR1 and/or NPR2). The protein is Snake venom metalloprotease inhibitor 02D01 of Echis ocellatus (Ocellated saw-scaled viper).